A 2289-amino-acid polypeptide reads, in one-letter code: Protein Ycf2 (2289 aa).

ATP is bound at residue 1643–1650 (GSIGTGRS).

Belongs to the Ycf2 family.

The protein resides in the plastid. Its subcellular location is the chloroplast stroma. In terms of biological role, probable ATPase of unknown function. Its presence in a non-photosynthetic plant (Epifagus virginiana) and experiments in tobacco indicate that it has an essential function which is probably not related to photosynthesis. This chain is Protein Ycf2, found in Aethionema grandiflorum (Persian stone-cress).